The sequence spans 256 residues: Cell division protein DivIB (256 aa).

Residues 1-23 (MSKDLISTDEYIKIKKKRKRIKK) are Cytoplasmic-facing. A helical transmembrane segment spans residues 24–44 (IVVLFIFLISILVTLCLKIPY). In terms of domain architecture, POTRA spans 45-113 (FNIESIEIKG…NKLQIYVKER (69 aa)). Topologically, residues 45–256 (FNIESIEIKG…EGNPVFYIEK (212 aa)) are extracellular.

The protein belongs to the FtsQ/DivIB family. DivIB subfamily.

The protein resides in the cell membrane. Its function is as follows. Cell division protein that may be involved in stabilizing or promoting the assembly of the division complex. The sequence is that of Cell division protein DivIB from Clostridium botulinum (strain Hall / ATCC 3502 / NCTC 13319 / Type A).